Reading from the N-terminus, the 206-residue chain is Small ribosomal subunit protein uS4 (206 aa).

The S4 RNA-binding domain maps to 98–163 (MRLDNVVYRL…SEKFKTFVEN (66 aa)).

Belongs to the universal ribosomal protein uS4 family. In terms of assembly, part of the 30S ribosomal subunit. Contacts protein S5. The interaction surface between S4 and S5 is involved in control of translational fidelity.

Functionally, one of the primary rRNA binding proteins, it binds directly to 16S rRNA where it nucleates assembly of the body of the 30S subunit. In terms of biological role, with S5 and S12 plays an important role in translational accuracy. The protein is Small ribosomal subunit protein uS4 of Clostridium botulinum (strain Alaska E43 / Type E3).